A 114-amino-acid chain; its full sequence is RutC family protein YoaB (114 aa).

This sequence belongs to the RutC family.

This chain is RutC family protein YoaB (yoaB), found in Escherichia coli O6:H1 (strain CFT073 / ATCC 700928 / UPEC).